The sequence spans 134 residues: Small ribosomal subunit protein bS6 (134 aa).

A compositionally biased stretch (basic and acidic residues) spans 113–122 (NRDIKEKEQP). A disordered region spans residues 113–134 (NRDIKEKEQPSESNVDADLKVN).

It belongs to the bacterial ribosomal protein bS6 family.

Functionally, binds together with bS18 to 16S ribosomal RNA. The sequence is that of Small ribosomal subunit protein bS6 from Borrelia duttonii (strain Ly).